The following is a 360-amino-acid chain: Peptide chain release factor 1 (360 aa).

N5-methylglutamine is present on Gln235. Basic and acidic residues predominate over residues Asp280 to Thr293. Positions Asp280–Ser300 are disordered.

This sequence belongs to the prokaryotic/mitochondrial release factor family. Post-translationally, methylated by PrmC. Methylation increases the termination efficiency of RF1.

The protein localises to the cytoplasm. Peptide chain release factor 1 directs the termination of translation in response to the peptide chain termination codons UAG and UAA. The sequence is that of Peptide chain release factor 1 from Paraburkholderia phytofirmans (strain DSM 17436 / LMG 22146 / PsJN) (Burkholderia phytofirmans).